Reading from the N-terminus, the 661-residue chain is UvrABC system protein B (661 aa).

In terms of domain architecture, Helicase ATP-binding spans 25 to 414 (AGLSSKKRSQ…GTVVELIIRP (390 aa)). 38 to 45 (GITGSGKT) contributes to the ATP binding site. The short motif at 91–114 (YYDYYQPEAYIARTDTFIEKDSSI) is the Beta-hairpin element. One can recognise a Helicase C-terminal domain in the interval 430 to 592 (QVEDLISEIQ…IIPKTINRAI (163 aa)). One can recognise a UVR domain in the interval 621–656 (KTHIDKLKKEMLKAASNLEFEQAVKLRDQLKTLEEA).

Belongs to the UvrB family. In terms of assembly, forms a heterotetramer with UvrA during the search for lesions. Interacts with UvrC in an incision complex.

The protein resides in the cytoplasm. Functionally, the UvrABC repair system catalyzes the recognition and processing of DNA lesions. A damage recognition complex composed of 2 UvrA and 2 UvrB subunits scans DNA for abnormalities. Upon binding of the UvrA(2)B(2) complex to a putative damaged site, the DNA wraps around one UvrB monomer. DNA wrap is dependent on ATP binding by UvrB and probably causes local melting of the DNA helix, facilitating insertion of UvrB beta-hairpin between the DNA strands. Then UvrB probes one DNA strand for the presence of a lesion. If a lesion is found the UvrA subunits dissociate and the UvrB-DNA preincision complex is formed. This complex is subsequently bound by UvrC and the second UvrB is released. If no lesion is found, the DNA wraps around the other UvrB subunit that will check the other stand for damage. The protein is UvrABC system protein B of Rickettsia conorii (strain ATCC VR-613 / Malish 7).